The chain runs to 131 residues: Modulator protein MzrA (131 aa).

The Cytoplasmic segment spans residues 1–14; it reads MSIRWLFPKLTPRK. Residues 15-31 form a helical membrane-spanning segment; sequence VARILILLALPIIALTQ. At 32-131 the chain is on the periplasmic side; sequence SQSLRHSQDD…KLTQKQSKLG (100 aa).

It belongs to the MzrA family. Interacts with EnvZ.

Its subcellular location is the cell inner membrane. In terms of biological role, modulates the activity of the EnvZ/OmpR two-component regulatory system, probably by directly modulating EnvZ enzymatic activity and increasing stability of phosphorylated OmpR. The polypeptide is Modulator protein MzrA (Pectobacterium carotovorum subsp. carotovorum (strain PC1)).